The chain runs to 347 residues: Farnesyl pyrophosphate synthase ERG20 (347 aa).

Residues K50, R53, and Q88 each coordinate isopentenyl diphosphate. Mg(2+) is bound by residues D95 and D99. R104 contributes to the dimethylallyl diphosphate binding site. R105 is an isopentenyl diphosphate binding site. Dimethylallyl diphosphate is bound by residues K192, T193, Q232, K249, and K258.

Belongs to the FPP/GGPP synthase family. Requires Mg(2+) as cofactor.

It catalyses the reaction isopentenyl diphosphate + dimethylallyl diphosphate = (2E)-geranyl diphosphate + diphosphate. It carries out the reaction isopentenyl diphosphate + (2E)-geranyl diphosphate = (2E,6E)-farnesyl diphosphate + diphosphate. Its pathway is isoprenoid biosynthesis; farnesyl diphosphate biosynthesis; farnesyl diphosphate from geranyl diphosphate and isopentenyl diphosphate: step 1/1. The protein operates within isoprenoid biosynthesis; geranyl diphosphate biosynthesis; geranyl diphosphate from dimethylallyl diphosphate and isopentenyl diphosphate: step 1/1. Farnesyl pyrophosphate synthase; part of the second module of ergosterol biosynthesis pathway that includes the middle steps of the pathway. ERG20 catalyzes the sequential condensation of isopentenyl pyrophosphate with dimethylallyl pyrophosphate, and then with the resultant geranylpyrophosphate to the ultimate product farnesyl pyrophosphate. The second module is carried out in the vacuole and involves the formation of farnesyl diphosphate, which is also an important intermediate in the biosynthesis of ubiquinone, dolichol, heme and prenylated proteins. Activity by the mevalonate kinase ERG12 (FG05912) first converts mevalonate into 5-phosphomevalonate. 5-phosphomevalonate is then further converted to 5-diphosphomevalonate by the phosphomevalonate kinase ERG8 (FG09764). The diphosphomevalonate decarboxylase ERG19 (FG10424) then produces isopentenyl diphosphate. The isopentenyl-diphosphate delta-isomerase IDI1 (FG09722) then catalyzes the 1,3-allylic rearrangement of the homoallylic substrate isopentenyl (IPP) to its highly electrophilic allylic isomer, dimethylallyl diphosphate (DMAPP). Finally the farnesyl diphosphate synthase ERG20 (FG06784) catalyzes the sequential condensation of isopentenyl pyrophosphate with dimethylallyl pyrophosphate, and then with the resultant geranylpyrophosphate to the ultimate product farnesyl pyrophosphate. The sequence is that of Farnesyl pyrophosphate synthase ERG20 from Gibberella zeae (strain ATCC MYA-4620 / CBS 123657 / FGSC 9075 / NRRL 31084 / PH-1) (Wheat head blight fungus).